A 280-amino-acid polypeptide reads, in one-letter code: Ataxin-3 homolog (280 aa).

Residues 7–187 (GGMLYHEVQE…QECPMSSSSE (181 aa)) enclose the Josephin domain. Cysteine 20 functions as the Nucleophile in the catalytic mechanism. Histidine 126 serves as the catalytic Proton acceptor. Residue aspartate 141 is part of the active site. Polar residues-rich tracts occupy residues 183–194 (SSSSEASNSFGQ) and 221–232 (DNVNQQRRNQAL). Positions 183–240 (SSSSEASNSFGQWLSPEDAERIRKNTSSGSSARNKRSNDNVNQQRRNQALSREEVQAF) are disordered. Positions 243–262 (MEDDDLKAAIAASLLDASAA) constitute a UIM domain.

Its subcellular location is the nucleus. The catalysed reaction is Thiol-dependent hydrolysis of ester, thioester, amide, peptide and isopeptide bonds formed by the C-terminal Gly of ubiquitin (a 76-residue protein attached to proteins as an intracellular targeting signal).. Functionally, interacts with key regulators of transcription and represses transcription. Acts as a histone-binding protein that regulates transcription. Acts as a deubiquitinating enzyme. The protein is Ataxin-3 homolog of Arabidopsis thaliana (Mouse-ear cress).